The chain runs to 298 residues: Inosose dehydratase (298 aa).

This sequence belongs to the IolE/MocC family. Glutathione serves as cofactor. Co(2+) is required as a cofactor. The cofactor is Mn(2+).

It catalyses the reaction scyllo-inosose = 3D-3,5/4-trihydroxycyclohexane-1,2-dione + H2O. It participates in polyol metabolism; myo-inositol degradation into acetyl-CoA; acetyl-CoA from myo-inositol: step 2/7. Functionally, catalyzes the dehydration of inosose (2-keto-myo-inositol, 2KMI or 2,4,6/3,5-pentahydroxycyclohexanone) to 3D-(3,5/4)-trihydroxycyclohexane-1,2-dione (D-2,3-diketo-4-deoxy-epi-inositol). In Bacillus cereus (strain AH820), this protein is Inosose dehydratase.